The chain runs to 620 residues: MSFDIAKYPTLALVDSTQELRLLPKESLPKLCDELRRYLLDSVSRSSGHFASGLGTVELTVALHYVYNTPFDQLIWDVGHQAYPHKILTGRRDKIGTIRQKGGLHPFPWRGESEYDVLSVGHSSTSISAGIGIAVAAEKEGKNRRTVCVIGDGAITAGMAFEAMNHAGDIRPDMLVVLNDNEMSISENVGALNNHLAQLLSGKLYSSLREGGKKVFSGVPPIKELLKRTEEHIKGMVVPGTLFEELGFNYIGPVDGHDVLGLITTLKNMRDLKGPQFLHIMTKKGRGYEPAEKDPITFHAVPKFDPSSGCLPKSSGGLPSYSKIFGDWLCETAAKDNKLMAITPAMREGSGMVEFSRKFPDRYFDVAIAEQHAVTFAAGLAIGGYKPIVAIYSTFLQRAYDQVLHDVAIQKLPVLFAIDRAGIVGADGQTHQGAFDLSYLRCIPEMVIMTPSDENECRQMLYTGYHYNDGPSAVRYPRGNAVGVELTPLEKLPIGKGIVKRRGEKLAILNFGTLMPDAAKVAESLNATLVDMRFVKPLDEALILEMAASHEALVTVEENAIMGGAGSGVNEVLMAHRKPVPVLNIGLPDFFIPQGTQEEMRAELGLGAAGMEAKIKAWLA.

Thiamine diphosphate contacts are provided by residues His80 and 121–123 (GHS). Residue Asp152 participates in Mg(2+) binding. Thiamine diphosphate-binding positions include 153–154 (GA), Asn181, Tyr288, and Glu370. Asn181 serves as a coordination point for Mg(2+).

It belongs to the transketolase family. DXPS subfamily. Homodimer. Requires Mg(2+) as cofactor. It depends on thiamine diphosphate as a cofactor.

It carries out the reaction D-glyceraldehyde 3-phosphate + pyruvate + H(+) = 1-deoxy-D-xylulose 5-phosphate + CO2. The protein operates within metabolic intermediate biosynthesis; 1-deoxy-D-xylulose 5-phosphate biosynthesis; 1-deoxy-D-xylulose 5-phosphate from D-glyceraldehyde 3-phosphate and pyruvate: step 1/1. Catalyzes the acyloin condensation reaction between C atoms 2 and 3 of pyruvate and glyceraldehyde 3-phosphate to yield 1-deoxy-D-xylulose-5-phosphate (DXP). This is 1-deoxy-D-xylulose-5-phosphate synthase from Escherichia coli (strain 55989 / EAEC).